Reading from the N-terminus, the 279-residue chain is Pleckstrin homology domain-containing family F member 1 (279 aa).

In terms of domain architecture, PH spans 35-131 (VLLGEGVLTK…WISHIEECVR (97 aa)). An FYVE-type zinc finger spans residues 152 to 212 (DKATDICMRC…VCSLCYRELA (61 aa)). Positions 158, 161, 175, 178, 183, 186, 204, and 207 each coordinate Zn(2+). The interval 219-264 (EAKERFRGSPGQLTHLGSTMCGASSGDDDDSDEDREGSGDGDWPTQ) is disordered. Residues 244–253 (GDDDDSDEDR) are compositionally biased toward acidic residues.

It is found in the nucleus. The protein localises to the cytoplasm. It localises to the perinuclear region. The protein resides in the lysosome. In terms of biological role, may induce apoptosis through the lysosomal-mitochondrial pathway. Translocates to the lysosome initiating the permeabilization of lysosomal membrane (LMP) and resulting in the release of CTSD and CTSL to the cytoplasm. Triggers the caspase-independent apoptosis by altering mitochondrial membrane permeabilization (MMP) resulting in the release of PDCD8. This Rattus norvegicus (Rat) protein is Pleckstrin homology domain-containing family F member 1 (Plekhf1).